A 1097-amino-acid chain; its full sequence is MGLPEVMPASVLRGQLLLFVLLLLGPQISQGLVITPPGPEFVLNISSTFVLTCSSSAPVMWEQMSQVPWQEAAMNQDGTFSSVLTLTNVTGGDTGEYFCVYNNSLGPELSERKRIYIFVPDPTMGFLPMDSEDLFIFVTDVTETTIPCRVTDPQLEVTLHEKKVDIPLHVPYDHQRGFIGTFEDKTYICKTTIGDREVDSDTYYVYSLQVSSINVSVNAVQTVVRQGESITIRCIVMGNDVVNFQWTYPRMKSGRLVEPVTDYLFGVPSRIGSILHIPTAELSDSGTYTCNVSVSVNDHGDEKAINVTVIENGYVRLLETLEDVQIAELHRSRTLQVVFEAYPTPSVLWFKDNRTLGDSSAGELVLSTRNVSETRYVSELTLVRVKVSEAGYYTMRAFHADDQVQLSFKLQVNVPVRVLELSESHPANGEQILRCRGRGMPQPNVTWSTCRDLKRCPRKLSPTPLGNSSKEESQLETNVTFWEEDQEYEVVSTLRLRHVDQPLSVRCMLQNSMGRDSQEVTVVPHSLPFKVVVISAILALVVLTVISLIILIMLWQRKPRYEIRWKVIESVSSDGHEYIYVDPVQLPYDSTWELPRDQLVLGRTLGSGAFGQVVEATAHGLSHSQATMKVAVKMLKSTARSSEKQALMSELKIMSHLGPHLNVVNLLGACTKGGPIYIITEYCRYGDLVDYLHRNKHTFLQRHSNKHCPPSTELYSNALPVGLSLPSHLNLTGESDGGYMDMSKDESVDYVPMLDMKGHIKYADIESSSYMAPYDNYVPSAPERTYRATLINDSPVLSYTDLVGFSYQVANGMEFLASKNCVHRDLAARNVLICEGKLVKICDFGLARDIMRDSNYISKGSTFLPLKWMAPESIFNSLYTTLSDVWSFGILLWEIFTLGGTPYPELPMNDQFYNAIKRGYRMAQPAHASDEIYEIMQKCWEEKFETRPPFSQLVLLLERLLGEGYKKKYQQVDEEFLRSDHPAILRSQARLPGLHSLRSPLDTSSVLYTAVQPNETDNDYIIPLPDPKPDAADEGLLEGSPSLASSTLNEVNTSSTISCDSPLELQEEPQAEPEAQLEQPQDSGCPGPLAEAEDSFL.

The N-terminal stretch at 1 to 31 (MGLPEVMPASVLRGQLLLFVLLLLGPQISQG) is a signal peptide. 3 Ig-like C2-type domains span residues 32 to 119 (LVIT…YIFV), 128 to 209 (PMDS…YSLQ), and 213 to 308 (INVS…INVT). Topologically, residues 32–531 (LVITPPGPEF…VVPHSLPFKV (500 aa)) are extracellular. Residues Asn-44, Asn-88, and Asn-102 are each glycosylated (N-linked (GlcNAc...) asparagine). Cys-53 and Cys-99 are joined by a disulfide. A disulfide bond links Cys-148 and Cys-189. N-linked (GlcNAc...) asparagine glycosylation occurs at Asn-214. A disulfide bond links Cys-234 and Cys-290. 7 N-linked (GlcNAc...) asparagine glycosylation sites follow: Asn-291, Asn-306, Asn-353, Asn-370, Asn-444, Asn-467, and Asn-478. Residues 415–523 (PVRVLELSES…GRDSQEVTVV (109 aa)) enclose the Ig-like C2-type 4 domain. An intrachain disulfide couples Cys-435 to Cys-507. Residues 532-552 (VVISAILALVVLTVISLIILI) form a helical membrane-spanning segment. The Cytoplasmic portion of the chain corresponds to 553–1097 (MLWQRKPRYE…PLAEAEDSFL (545 aa)). Tyr-561, Tyr-578, and Tyr-580 each carry phosphotyrosine; by autocatalysis. The Protein kinase domain maps to 599–961 (LVLGRTLGSG…QLVLLLERLL (363 aa)). ATP contacts are provided by residues 605–613 (LGSGAFGQV) and Lys-633. At Tyr-685 the chain carries Phosphotyrosine; by ABL1 and ABL2. 7 positions are modified to phosphotyrosine; by autocatalysis: Tyr-715, Tyr-739, Tyr-750, Tyr-762, Tyr-770, Tyr-774, and Tyr-777. The active-site Proton acceptor is the Asp-825. Tyr-856 is subject to Phosphotyrosine; by autocatalysis. Phosphotyrosine; by ABL1 and ABL2 occurs at positions 933 and 969. A phosphotyrosine; by autocatalysis mark is found at Tyr-1008 and Tyr-1020. The segment at 1016–1097 (TDNDYIIPLP…PLAEAEDSFL (82 aa)) is disordered. The segment covering 1042 to 1059 (SLASSTLNEVNTSSTISC) has biased composition (polar residues). Over residues 1072–1081 (EPEAQLEQPQ) the composition is skewed to low complexity.

Belongs to the protein kinase superfamily. Tyr protein kinase family. CSF-1/PDGF receptor subfamily. In terms of assembly, interacts with homodimeric PDGFB and PDGFD, and with heterodimers formed by PDGFA and PDGFB. May also interact with homodimeric PDGFC. Monomer in the absence of bound ligand. Interaction with homodimeric PDGFB, heterodimers formed by PDGFA and PDGFB or homodimeric PDGFD, leads to receptor dimerization, where both PDGFRA homodimers and heterodimers with PDGFRB are observed. Interacts with SH2B2/APS. Interacts directly (tyrosine phosphorylated) with SHB. Interacts (tyrosine phosphorylated) with PIK3R1 and RASA1. Interacts (tyrosine phosphorylated) with CBL. Interacts (tyrosine phosphorylated) with SRC and SRC family kinases. Interacts (tyrosine phosphorylated) with PIK3C2B, maybe indirectly. Interacts (tyrosine phosphorylated) with SHC1, GRB7, GRB10 and NCK1. Interaction with GRB2 is mediated by SHC1. Interacts (via C-terminus) with NHERF1. N-glycosylated. Post-translationally, ubiquitinated. After autophosphorylation, the receptor is polyubiquitinated, leading to its degradation. In terms of processing, autophosphorylated on tyrosine residues upon ligand binding. Autophosphorylation occurs in trans, i.e. one subunit of the dimeric receptor phosphorylates tyrosine residues on the other subunit. Phosphorylation at Tyr-578, and to a lesser degree, Tyr-580 is important for interaction with SRC. Phosphorylation at Tyr-715 is important for interaction with GRB2. Phosphorylation at Tyr-739 and Tyr-750 is important for interaction with PIK3R1. Phosphorylation at Tyr-750 is important for interaction with NCK1. Phosphorylation at Tyr-770 and Tyr-856 is important for interaction with RASA1/GAP. Phosphorylation at Tyr-856 is important for efficient phosphorylation of PLCG1 and PTPN11, resulting in increased phosphorylation of AKT1, MAPK1/ERK2 and/or MAPK3/ERK1, PDCD6IP/ALIX and STAM, and in increased cell proliferation. Phosphorylation at Tyr-1008 is important for interaction with PTPN11. Phosphorylation at Tyr-1008 and Tyr-1020 is important for interaction with PLCG1. Dephosphorylated by PTPRJ at Tyr-750, Tyr-856, Tyr-1008 and Tyr-1020. Dephosphorylated by PTPN2 at Tyr-578 and Tyr-1020.

The protein resides in the cell membrane. It localises to the cytoplasmic vesicle. The protein localises to the lysosome lumen. The catalysed reaction is L-tyrosyl-[protein] + ATP = O-phospho-L-tyrosyl-[protein] + ADP + H(+). Its activity is regulated as follows. Present in an inactive conformation in the absence of bound ligand. Binding of PDGFB and/or PDGFD leads to dimerization and activation by autophosphorylation on tyrosine residues. Its function is as follows. Tyrosine-protein kinase that acts as a cell-surface receptor for homodimeric PDGFB and PDGFD and for heterodimers formed by PDGFA and PDGFB, and plays an essential role in the regulation of embryonic development, cell proliferation, survival, differentiation, chemotaxis and migration. Plays an essential role in blood vessel development by promoting proliferation, migration and recruitment of pericytes and smooth muscle cells to endothelial cells. Plays a role in the migration of vascular smooth muscle cells and the formation of neointima at vascular injury sites. Required for normal development of the cardiovascular system. Required for normal recruitment of pericytes (mesangial cells) in the kidney glomerulus, and for normal formation of a branched network of capillaries in kidney glomeruli. Promotes rearrangement of the actin cytoskeleton and the formation of membrane ruffles. Binding of its cognate ligands - homodimeric PDGFB, heterodimers formed by PDGFA and PDGFB or homodimeric PDGFD -leads to the activation of several signaling cascades; the response depends on the nature of the bound ligand and is modulated by the formation of heterodimers between PDGFRA and PDGFRB. Phosphorylates PLCG1, PIK3R1, PTPN11, RASA1/GAP, CBL, SHC1 and NCK1. Activation of PLCG1 leads to the production of the cellular signaling molecules diacylglycerol and inositol 1,4,5-trisphosphate, mobilization of cytosolic Ca(2+) and the activation of protein kinase C. Phosphorylation of PIK3R1, the regulatory subunit of phosphatidylinositol 3-kinase, leads to the activation of the AKT1 signaling pathway. Phosphorylation of SHC1, or of the C-terminus of PTPN11, creates a binding site for GRB2, resulting in the activation of HRAS, RAF1 and down-stream MAP kinases, including MAPK1/ERK2 and/or MAPK3/ERK1. Promotes phosphorylation and activation of SRC family kinases. Promotes phosphorylation of PDCD6IP/ALIX and STAM. Receptor signaling is down-regulated by protein phosphatases that dephosphorylate the receptor and its down-stream effectors, and by rapid internalization of the activated receptor. This chain is Platelet-derived growth factor receptor beta (Pdgfrb), found in Rattus norvegicus (Rat).